A 289-amino-acid chain; its full sequence is Epoxyqueuosine reductase (289 aa).

The Proton donor role is filled by Asp-111. In terms of domain architecture, 4Fe-4S ferredoxin-type spans Gln-156–Val-185. Cys-165, Cys-168, Cys-171, Cys-175, Cys-191, Cys-219, Cys-222, and Cys-226 together coordinate [4Fe-4S] cluster.

The protein belongs to the QueG family. In terms of assembly, monomer. The cofactor is cob(II)alamin. Requires [4Fe-4S] cluster as cofactor.

It localises to the cytoplasm. The enzyme catalyses epoxyqueuosine(34) in tRNA + AH2 = queuosine(34) in tRNA + A + H2O. Its pathway is tRNA modification; tRNA-queuosine biosynthesis. Functionally, catalyzes the conversion of epoxyqueuosine (oQ) to queuosine (Q), which is a hypermodified base found in the wobble positions of tRNA(Asp), tRNA(Asn), tRNA(His) and tRNA(Tyr). This Synechocystis sp. (strain ATCC 27184 / PCC 6803 / Kazusa) protein is Epoxyqueuosine reductase.